The following is a 453-amino-acid chain: UDP-N-acetylmuramoylalanine--D-glutamate ligase (453 aa).

117-123 serves as a coordination point for ATP; it reads GSNGKST.

Belongs to the MurCDEF family.

It localises to the cytoplasm. The catalysed reaction is UDP-N-acetyl-alpha-D-muramoyl-L-alanine + D-glutamate + ATP = UDP-N-acetyl-alpha-D-muramoyl-L-alanyl-D-glutamate + ADP + phosphate + H(+). It participates in cell wall biogenesis; peptidoglycan biosynthesis. Functionally, cell wall formation. Catalyzes the addition of glutamate to the nucleotide precursor UDP-N-acetylmuramoyl-L-alanine (UMA). The sequence is that of UDP-N-acetylmuramoylalanine--D-glutamate ligase from Chromobacterium violaceum (strain ATCC 12472 / DSM 30191 / JCM 1249 / CCUG 213 / NBRC 12614 / NCIMB 9131 / NCTC 9757 / MK).